Reading from the N-terminus, the 149-residue chain is Basic phospholipase A2 homolog MitTx-beta (149 aa).

An N-terminal signal peptide occupies residues 1–30 (MDKMNPAHLLVLAAVCVSLLGASSIPPQAL). Cystine bridges form between Cys-41–Cys-100, Cys-55–Cys-148, Cys-57–Cys-73, Cys-72–Cys-130, Cys-79–Cys-123, Cys-89–Cys-116, and Cys-109–Cys-121.

The protein belongs to the phospholipase A2 family. Group I subfamily. K49 sub-subfamily. Heterodimer of an alpha (Kunitz-type) and a beta (phospholipase A2 homolog) chains; non-covalently-linked. Expressed by the venom gland.

It localises to the secreted. Functionally, heterodimer: MitTx, a heteromeric complex between Kunitz- and phospholipase-A2-like proteins, potently, persistently and selectively activates rat and chicken acid-sensing ion channel ASIC1. Both alternatively spliced rat isoforms ASIC1a and ASIC1b are activated, with a higher potency for ASIC1a (EC(50)=9.4 nM) vs ASIC1b (EC(50)=23 nM). The rat ASIC3 subtype is also sensitive to the heterodimer, but with a lower potency (EC(50)=830 nM). On rat ASIC2a, the toxin shows a very weak activation, but produces a remarkable potentiation (&gt;100-fold) of protons when the extracellular pH drops below neutrality. Moderate and weak activations are also observed on the heterotrimers Asic1a-Asic2a and Asic1a-Asic3 (expressed in CHO cells), respectively. The binding sites of the beta subunit of MitTx and the spider psalmotoxin-1 toxin overlap, explaining why these toxins are mutually exclusive. In vivo, the heterodimer elicits robust pain-related behavior in mice by activation of ASIC1 channels on capsaicin-sensitive nerve fibers. In terms of biological role, monomer: does not have phospholipase A2 activity but may maintain some lipid-binding character from its PLA2 lineage, which could aid in effecting neuronal depolarization. The chain is Basic phospholipase A2 homolog MitTx-beta from Micrurus tener tener (Texas coral snake).